The chain runs to 331 residues: Holliday junction branch migration complex subunit RuvB (331 aa).

The segment at M1 to Y182 is large ATPase domain (RuvB-L). ATP contacts are provided by residues L21, R22, G63, K66, T67, T68, E129–Y131, R172, Y182, and R219. T67 lines the Mg(2+) pocket. Residues S183–G254 are small ATPAse domain (RuvB-S). The tract at residues G257–I331 is head domain (RuvB-H). Residues R310 and R315 each coordinate DNA.

Belongs to the RuvB family. As to quaternary structure, homohexamer. Forms an RuvA(8)-RuvB(12)-Holliday junction (HJ) complex. HJ DNA is sandwiched between 2 RuvA tetramers; dsDNA enters through RuvA and exits via RuvB. An RuvB hexamer assembles on each DNA strand where it exits the tetramer. Each RuvB hexamer is contacted by two RuvA subunits (via domain III) on 2 adjacent RuvB subunits; this complex drives branch migration. In the full resolvosome a probable DNA-RuvA(4)-RuvB(12)-RuvC(2) complex forms which resolves the HJ.

Its subcellular location is the cytoplasm. The enzyme catalyses ATP + H2O = ADP + phosphate + H(+). The RuvA-RuvB-RuvC complex processes Holliday junction (HJ) DNA during genetic recombination and DNA repair, while the RuvA-RuvB complex plays an important role in the rescue of blocked DNA replication forks via replication fork reversal (RFR). RuvA specifically binds to HJ cruciform DNA, conferring on it an open structure. The RuvB hexamer acts as an ATP-dependent pump, pulling dsDNA into and through the RuvAB complex. RuvB forms 2 homohexamers on either side of HJ DNA bound by 1 or 2 RuvA tetramers; 4 subunits per hexamer contact DNA at a time. Coordinated motions by a converter formed by DNA-disengaged RuvB subunits stimulates ATP hydrolysis and nucleotide exchange. Immobilization of the converter enables RuvB to convert the ATP-contained energy into a lever motion, pulling 2 nucleotides of DNA out of the RuvA tetramer per ATP hydrolyzed, thus driving DNA branch migration. The RuvB motors rotate together with the DNA substrate, which together with the progressing nucleotide cycle form the mechanistic basis for DNA recombination by continuous HJ branch migration. Branch migration allows RuvC to scan DNA until it finds its consensus sequence, where it cleaves and resolves cruciform DNA. The polypeptide is Holliday junction branch migration complex subunit RuvB (Anaplasma marginale (strain St. Maries)).